The primary structure comprises 78 residues: Acyl carrier protein (78 aa).

The 76-residue stretch at 2 to 77 folds into the Carrier domain; sequence SDIAERVKKI…DAIKFLEKNS (76 aa). The residue at position 37 (Ser-37) is an O-(pantetheine 4'-phosphoryl)serine.

Belongs to the acyl carrier protein (ACP) family. 4'-phosphopantetheine is transferred from CoA to a specific serine of apo-ACP by AcpS. This modification is essential for activity because fatty acids are bound in thioester linkage to the sulfhydryl of the prosthetic group.

It is found in the cytoplasm. It functions in the pathway lipid metabolism; fatty acid biosynthesis. Its function is as follows. Carrier of the growing fatty acid chain in fatty acid biosynthesis. This is Acyl carrier protein from Methylorubrum extorquens (strain CM4 / NCIMB 13688) (Methylobacterium extorquens).